The following is a 34-amino-acid chain: Protein HRURF (34 aa).

In terms of biological role, may function as an inhibitory translational control element that can negatively regulate protein translation of HR gene. The protein is Protein HRURF of Homo sapiens (Human).